The primary structure comprises 207 residues: RNA chaperone ProQ (207 aa).

Residues 100–156 form a disordered region; that stretch reads TLAESKAKVQARRKEQAQKARDEEKSKPKTKKAPQQRRANKPQAQKPAKQPVETRAL. The segment covering 111 to 126 has biased composition (basic and acidic residues); sequence RRKEQAQKARDEEKSK. The segment covering 127 to 139 has biased composition (basic residues); sequence PKTKKAPQQRRAN.

Belongs to the ProQ family.

The protein localises to the cytoplasm. In terms of biological role, RNA chaperone with significant RNA binding, RNA strand exchange and RNA duplexing activities. The protein is RNA chaperone ProQ of Vibrio vulnificus (strain CMCP6).